A 303-amino-acid chain; its full sequence is Sulfate adenylyltransferase subunit 2 (303 aa).

A disordered region spans residues 281–303 (RQGRVIDHDSSGSMEKKKQEGYF).

The protein belongs to the PAPS reductase family. CysD subfamily. Heterodimer composed of CysD, the smaller subunit, and CysN.

It carries out the reaction sulfate + ATP + H(+) = adenosine 5'-phosphosulfate + diphosphate. Its pathway is sulfur metabolism; hydrogen sulfide biosynthesis; sulfite from sulfate: step 1/3. With CysN forms the ATP sulfurylase (ATPS) that catalyzes the adenylation of sulfate producing adenosine 5'-phosphosulfate (APS) and diphosphate, the first enzymatic step in sulfur assimilation pathway. APS synthesis involves the formation of a high-energy phosphoric-sulfuric acid anhydride bond driven by GTP hydrolysis by CysN coupled to ATP hydrolysis by CysD. The sequence is that of Sulfate adenylyltransferase subunit 2 from Saccharophagus degradans (strain 2-40 / ATCC 43961 / DSM 17024).